A 401-amino-acid polypeptide reads, in one-letter code: Tyrosine--tRNA ligase (401 aa).

Residues 41–50 carry the 'HIGH' region motif; sequence PSRPDLHLGH. Positions 225-229 match the 'KMSKS' region motif; the sequence is KMSKS. Position 228 (K228) interacts with ATP. An S4 RNA-binding domain is found at 334-395; the sequence is KNIVDLLVEI…GKRKFYRISG (62 aa).

The protein belongs to the class-I aminoacyl-tRNA synthetase family. TyrS type 2 subfamily. In terms of assembly, homodimer.

It localises to the cytoplasm. The enzyme catalyses tRNA(Tyr) + L-tyrosine + ATP = L-tyrosyl-tRNA(Tyr) + AMP + diphosphate + H(+). In terms of biological role, catalyzes the attachment of tyrosine to tRNA(Tyr) in a two-step reaction: tyrosine is first activated by ATP to form Tyr-AMP and then transferred to the acceptor end of tRNA(Tyr). The polypeptide is Tyrosine--tRNA ligase (Thermotoga maritima (strain ATCC 43589 / DSM 3109 / JCM 10099 / NBRC 100826 / MSB8)).